Consider the following 513-residue polypeptide: Putative ribose/galactose/methyl galactoside import ATP-binding protein 2 (513 aa).

2 consecutive ABC transporter domains span residues 24 to 260 (LAAD…VGRE) and 270 to 510 (VPIG…VMDL). 56 to 63 (GENGAGKS) contacts ATP.

Belongs to the ABC transporter superfamily. Carbohydrate importer 2 (CUT2) (TC 3.A.1.2) family.

Its subcellular location is the cell inner membrane. It catalyses the reaction D-ribose(out) + ATP + H2O = D-ribose(in) + ADP + phosphate + H(+). The enzyme catalyses D-galactose(out) + ATP + H2O = D-galactose(in) + ADP + phosphate + H(+). Functionally, part of an ABC transporter complex involved in carbohydrate import. Could be involved in ribose, galactose and/or methyl galactoside import. Responsible for energy coupling to the transport system. The polypeptide is Putative ribose/galactose/methyl galactoside import ATP-binding protein 2 (Agrobacterium fabrum (strain C58 / ATCC 33970) (Agrobacterium tumefaciens (strain C58))).